Reading from the N-terminus, the 582-residue chain is V-type ATP synthase alpha chain (582 aa).

231 to 238 (GPFGSGKT) lines the ATP pocket.

It belongs to the ATPase alpha/beta chains family.

It catalyses the reaction ATP + H2O + 4 H(+)(in) = ADP + phosphate + 5 H(+)(out). Its function is as follows. Produces ATP from ADP in the presence of a proton gradient across the membrane. The V-type alpha chain is a catalytic subunit. The polypeptide is V-type ATP synthase alpha chain (Deinococcus deserti (strain DSM 17065 / CIP 109153 / LMG 22923 / VCD115)).